Consider the following 396-residue polypeptide: Tryptophan synthase beta chain (396 aa).

N6-(pyridoxal phosphate)lysine is present on K88.

It belongs to the TrpB family. Tetramer of two alpha and two beta chains. It depends on pyridoxal 5'-phosphate as a cofactor.

It catalyses the reaction (1S,2R)-1-C-(indol-3-yl)glycerol 3-phosphate + L-serine = D-glyceraldehyde 3-phosphate + L-tryptophan + H2O. It participates in amino-acid biosynthesis; L-tryptophan biosynthesis; L-tryptophan from chorismate: step 5/5. The beta subunit is responsible for the synthesis of L-tryptophan from indole and L-serine. The protein is Tryptophan synthase beta chain of Shewanella sp. (strain ANA-3).